The chain runs to 134 residues: 6,7-dimethyl-8-ribityllumazine synthase (134 aa).

Residues Phe12, 44-46 (VFD), and 68-70 (SVI) contribute to the 5-amino-6-(D-ribitylamino)uracil site. 73–74 (ET) contributes to the (2S)-2-hydroxy-3-oxobutyl phosphate binding site. The Proton donor role is filled by His76. Residue Leu101 participates in 5-amino-6-(D-ribitylamino)uracil binding. Residue Arg116 participates in (2S)-2-hydroxy-3-oxobutyl phosphate binding.

It belongs to the DMRL synthase family.

It carries out the reaction (2S)-2-hydroxy-3-oxobutyl phosphate + 5-amino-6-(D-ribitylamino)uracil = 6,7-dimethyl-8-(1-D-ribityl)lumazine + phosphate + 2 H2O + H(+). Its pathway is cofactor biosynthesis; riboflavin biosynthesis; riboflavin from 2-hydroxy-3-oxobutyl phosphate and 5-amino-6-(D-ribitylamino)uracil: step 1/2. In terms of biological role, catalyzes the formation of 6,7-dimethyl-8-ribityllumazine by condensation of 5-amino-6-(D-ribitylamino)uracil with 3,4-dihydroxy-2-butanone 4-phosphate. This is the penultimate step in the biosynthesis of riboflavin. This is 6,7-dimethyl-8-ribityllumazine synthase from Methanosarcina acetivorans (strain ATCC 35395 / DSM 2834 / JCM 12185 / C2A).